We begin with the raw amino-acid sequence, 310 residues long: UDP-N-acetylenolpyruvoylglucosamine reductase (310 aa).

An FAD-binding PCMH-type domain is found at 27-192 (KIGGKARYIV…LKATFRLQYA (166 aa)). Arg171 is a catalytic residue. The active-site Proton donor is the Ser223. Glu293 is a catalytic residue.

It belongs to the MurB family. FAD is required as a cofactor.

It localises to the cytoplasm. The catalysed reaction is UDP-N-acetyl-alpha-D-muramate + NADP(+) = UDP-N-acetyl-3-O-(1-carboxyvinyl)-alpha-D-glucosamine + NADPH + H(+). The protein operates within cell wall biogenesis; peptidoglycan biosynthesis. Functionally, cell wall formation. The protein is UDP-N-acetylenolpyruvoylglucosamine reductase of Caldicellulosiruptor saccharolyticus (strain ATCC 43494 / DSM 8903 / Tp8T 6331).